A 1007-amino-acid polypeptide reads, in one-letter code: Beta-galactosidase A (1007 aa).

The N-terminal stretch at 1-18 (MKLSSACAIALLAAQAAG) is a signal peptide. Substrate contacts are provided by residues Tyr96 and 140–142 (NAE). A glycan (N-linked (GlcNAc...) asparagine) is linked at Asn156. Position 199 (Asn199) interacts with substrate. The active-site Proton donor is Glu200. 2 disulfide bridges follow: Cys205/Cys206 and Cys266/Cys315. Catalysis depends on Glu298, which acts as the Nucleophile. Tyr364 lines the substrate pocket. Asn402, Asn422, Asn478, Asn522, Asn622, Asn739, Asn760, Asn777, Asn805, and Asn914 each carry an N-linked (GlcNAc...) asparagine glycan.

It belongs to the glycosyl hydrolase 35 family.

Its subcellular location is the secreted. It catalyses the reaction Hydrolysis of terminal non-reducing beta-D-galactose residues in beta-D-galactosides.. Functionally, cleaves beta-linked terminal galactosyl residues from gangliosides, glycoproteins, and glycosaminoglycans. In Aspergillus niger (strain ATCC MYA-4892 / CBS 513.88 / FGSC A1513), this protein is Beta-galactosidase A (lacA).